The chain runs to 165 residues: Acireductone dioxygenase (165 aa).

Fe(2+) contacts are provided by His-90, His-92, Glu-96, and His-134. Residues His-90, His-92, Glu-96, and His-134 each coordinate Ni(2+).

Belongs to the acireductone dioxygenase (ARD) family. In terms of assembly, monomer. Requires Fe(2+) as cofactor. Ni(2+) serves as cofactor.

It catalyses the reaction 1,2-dihydroxy-5-(methylsulfanyl)pent-1-en-3-one + O2 = 3-(methylsulfanyl)propanoate + CO + formate + 2 H(+). The catalysed reaction is 1,2-dihydroxy-5-(methylsulfanyl)pent-1-en-3-one + O2 = 4-methylsulfanyl-2-oxobutanoate + formate + 2 H(+). It participates in amino-acid biosynthesis; L-methionine biosynthesis via salvage pathway; L-methionine from S-methyl-5-thio-alpha-D-ribose 1-phosphate: step 5/6. Its function is as follows. Catalyzes 2 different reactions between oxygen and the acireductone 1,2-dihydroxy-3-keto-5-methylthiopentene (DHK-MTPene) depending upon the metal bound in the active site. Fe-containing acireductone dioxygenase (Fe-ARD) produces formate and 2-keto-4-methylthiobutyrate (KMTB), the alpha-ketoacid precursor of methionine in the methionine recycle pathway. Ni-containing acireductone dioxygenase (Ni-ARD) produces methylthiopropionate, carbon monoxide and formate, and does not lie on the methionine recycle pathway. The polypeptide is Acireductone dioxygenase (Rhodopseudomonas palustris (strain TIE-1)).